The primary structure comprises 494 residues: Glycerol kinase (494 aa).

T13 lines the ADP pocket. ATP contacts are provided by T13, T14, and S15. T13 is a binding site for sn-glycerol 3-phosphate. R17 contributes to the ADP binding site. Residues R83, E84, Y135, and D244 each contribute to the sn-glycerol 3-phosphate site. R83, E84, Y135, D244, and Q245 together coordinate glycerol. Residues T266 and G309 each contribute to the ADP site. T266, G309, Q313, and G410 together coordinate ATP. Positions 410 and 414 each coordinate ADP.

This sequence belongs to the FGGY kinase family.

It catalyses the reaction glycerol + ATP = sn-glycerol 3-phosphate + ADP + H(+). The protein operates within polyol metabolism; glycerol degradation via glycerol kinase pathway; sn-glycerol 3-phosphate from glycerol: step 1/1. Its activity is regulated as follows. Inhibited by fructose 1,6-bisphosphate (FBP). Its function is as follows. Key enzyme in the regulation of glycerol uptake and metabolism. Catalyzes the phosphorylation of glycerol to yield sn-glycerol 3-phosphate. This chain is Glycerol kinase, found in Shewanella sp. (strain ANA-3).